A 368-amino-acid chain; its full sequence is tRNA-specific 2-thiouridylase MnmA (368 aa).

ATP contacts are provided by residues 11–18 and Met-37; that span reads GMSGGVDS. An interaction with target base in tRNA region spans residues 97-99; the sequence is NPD. The active-site Nucleophile is Cys-102. A disulfide bond links Cys-102 and Cys-199. Position 127 (Gly-127) interacts with ATP. The interval 149-151 is interaction with tRNA; the sequence is KDQ. The active-site Cysteine persulfide intermediate is the Cys-199. The interval 311-312 is interaction with tRNA; it reads RY.

The protein belongs to the MnmA/TRMU family. In terms of assembly, interacts with TusE.

The protein localises to the cytoplasm. It carries out the reaction S-sulfanyl-L-cysteinyl-[protein] + uridine(34) in tRNA + AH2 + ATP = 2-thiouridine(34) in tRNA + L-cysteinyl-[protein] + A + AMP + diphosphate + H(+). Catalyzes the 2-thiolation of uridine at the wobble position (U34) of tRNA(Lys), tRNA(Glu) and tRNA(Gln), leading to the formation of s(2)U34, the first step of tRNA-mnm(5)s(2)U34 synthesis. Sulfur is provided by IscS, via a sulfur-relay system. Binds ATP and its substrate tRNAs. The sequence is that of tRNA-specific 2-thiouridylase MnmA from Shigella boydii serotype 4 (strain Sb227).